The sequence spans 590 residues: Aspartate--tRNA(Asp/Asn) ligase (590 aa).

Glu-175 is an L-aspartate binding site. An aspartate region spans residues 199–202 (QQYK). Residues Arg-221 and His-450 each contribute to the L-aspartate site. Residue 221 to 223 (RDE) coordinates ATP. Glu-484 serves as a coordination point for ATP. Arg-491 provides a ligand contact to L-aspartate. An ATP-binding site is contributed by 536–539 (GVDR).

This sequence belongs to the class-II aminoacyl-tRNA synthetase family. Type 1 subfamily. Homodimer.

It is found in the cytoplasm. The catalysed reaction is tRNA(Asx) + L-aspartate + ATP = L-aspartyl-tRNA(Asx) + AMP + diphosphate. Aspartyl-tRNA synthetase with relaxed tRNA specificity since it is able to aspartylate not only its cognate tRNA(Asp) but also tRNA(Asn). Reaction proceeds in two steps: L-aspartate is first activated by ATP to form Asp-AMP and then transferred to the acceptor end of tRNA(Asp/Asn). In Rhodopseudomonas palustris (strain BisB18), this protein is Aspartate--tRNA(Asp/Asn) ligase.